The following is a 176-amino-acid chain: Nudix hydrolase 18, mitochondrial (176 aa).

Residues 1 to 21 (MVCLVSRTGRQSQRYNKGRRQ) constitute a mitochondrion transit peptide. The Nudix hydrolase domain occupies 22-153 (VVGCIPYRLK…WMKEALDVLV (132 aa)). The short motif at 60–81 (GGWELDESVEEAASRESLEEAG) is the Nudix box element. Glutamate 75 and glutamate 79 together coordinate Mg(2+).

Belongs to the Nudix hydrolase family. It depends on Mg(2+) as a cofactor. Mn(2+) serves as cofactor. Expressed in roots, stems and inflorescences.

It is found in the mitochondrion. In terms of biological role, probably mediates the hydrolysis of some nucleoside diphosphate derivatives. The polypeptide is Nudix hydrolase 18, mitochondrial (NUDT18) (Arabidopsis thaliana (Mouse-ear cress)).